The sequence spans 153 residues: Calmodulin-like protein 3 (153 aa).

4 consecutive EF-hand domains span residues 1–36 (MDQA…LGIY), 37–72 (IPDK…IMEE), 74–109 (DEEE…LGLK), and 112–147 (RTLE…GGFA). Aspartate 14, asparagine 16, aspartate 18, lysine 20, glutamate 25, aspartate 50, asparagine 52, aspartate 54, tyrosine 56, glutamate 61, aspartate 87, asparagine 89, aspartate 91, glutamate 98, aspartate 125, aspartate 127, aspartate 129, methionine 131, and glutamate 136 together coordinate Ca(2+).

The protein belongs to the calmodulin family.

In terms of biological role, potential calcium sensor. The sequence is that of Calmodulin-like protein 3 (CML3) from Arabidopsis thaliana (Mouse-ear cress).